The primary structure comprises 264 residues: Indole-3-glycerol phosphate synthase (264 aa).

The protein belongs to the TrpC family.

It carries out the reaction 1-(2-carboxyphenylamino)-1-deoxy-D-ribulose 5-phosphate + H(+) = (1S,2R)-1-C-(indol-3-yl)glycerol 3-phosphate + CO2 + H2O. It functions in the pathway amino-acid biosynthesis; L-tryptophan biosynthesis; L-tryptophan from chorismate: step 4/5. The chain is Indole-3-glycerol phosphate synthase from Polaromonas sp. (strain JS666 / ATCC BAA-500).